The primary structure comprises 477 residues: Argininosuccinate lyase (477 aa).

Belongs to the lyase 1 family. Argininosuccinate lyase subfamily.

The protein resides in the cytoplasm. The enzyme catalyses 2-(N(omega)-L-arginino)succinate = fumarate + L-arginine. Its pathway is amino-acid biosynthesis; L-arginine biosynthesis; L-arginine from L-ornithine and carbamoyl phosphate: step 3/3. The protein is Argininosuccinate lyase of Acinetobacter baumannii (strain AB307-0294).